The chain runs to 120 residues: Large ribosomal subunit protein uL18 (120 aa).

This sequence belongs to the universal ribosomal protein uL18 family. As to quaternary structure, part of the 50S ribosomal subunit; part of the 5S rRNA/L5/L18/L25 subcomplex. Contacts the 5S and 23S rRNAs.

Its function is as follows. This is one of the proteins that bind and probably mediate the attachment of the 5S RNA into the large ribosomal subunit, where it forms part of the central protuberance. The chain is Large ribosomal subunit protein uL18 from Bartonella tribocorum (strain CIP 105476 / IBS 506).